Reading from the N-terminus, the 170-residue chain is MNRLPPVALVFLGGALGAIIRWTLTVWIPALGDPTRVLGAATPLNIIGGIPLGDIALLVVNVLGALLLGLLVGMIPDSAHPRRTFWGTGVLGGFTSFSSLAAAVDATTDSASTILIGGTYGVFTLALGLIAAAMGLRLGRDLNELARLRRAADGADEPQDPHEPHKGGAR.

4 helical membrane-spanning segments follow: residues 8-28 (ALVF…TVWI), 55-75 (IALL…VGMI), 84-104 (TFWG…AAAV), and 114-134 (ILIG…AAAM). Residues G92 and T95 each contribute to the Na(+) site.

This sequence belongs to the fluoride channel Fluc/FEX (TC 1.A.43) family.

Its subcellular location is the cell membrane. The catalysed reaction is fluoride(in) = fluoride(out). Na(+) is not transported, but it plays an essential structural role and its presence is essential for fluoride channel function. Fluoride-specific ion channel. Important for reducing fluoride concentration in the cell, thus reducing its toxicity. This Corynebacterium jeikeium (strain K411) protein is Fluoride-specific ion channel FluC 2.